Consider the following 112-residue polypeptide: Large ribosomal subunit protein eL22 (112 aa).

This sequence belongs to the eukaryotic ribosomal protein eL22 family. Component of the large ribosomal subunit.

It is found in the cytoplasm. In Encephalitozoon cuniculi (strain GB-M1) (Microsporidian parasite), this protein is Large ribosomal subunit protein eL22 (RPL22).